The primary structure comprises 669 residues: Gametogenetin-binding protein 2 (669 aa).

2 disordered regions span residues 375–421 (QEKK…GNPC) and 452–475 (PHSNVSDCGYSSSLEGSEPGSQEG). The span at 376–388 (EKKRQKKNRKKNK) shows a compositional bias: basic residues. Polar residues predominate over residues 398 to 408 (ETKSANPSQKN).

It localises to the cytoplasm. Its function is as follows. May be involved in spermatogenesis. The protein is Gametogenetin-binding protein 2 (ggnbp2) of Xenopus tropicalis (Western clawed frog).